Here is a 493-residue protein sequence, read N- to C-terminus: Reticulophagy regulator 1 (493 aa).

Residues 1-52 (MASPAPPEPAEQGSPALAAAPQAPPPPTRAPPEEPEGAAPPEEGAAAGAGRQ) are disordered. Residues 1–55 (MASPAPPEPAEQGSPALAAAPQAPPPPTRAPPEEPEGAAPPEEGAAAGAGRQVEE) lie on the Cytoplasmic side of the membrane. Residues 37–52 (GAAPPEEGAAAGAGRQ) are compositionally biased toward low complexity. Residues 56–76 (AAGGVAAVVTWLLGEPALWLG) form a helical membrane-spanning segment. Over 77–87 (GRADELLSWKR) the chain is Lumenal. Residues 80–229 (DELLSWKRPL…LLCAFLCPLF (150 aa)) are reticulon homology domain. Residues 88 to 108 (PLHSLLAFVGANLVFWFLALT) form a helical membrane-spanning segment. At 109–114 (PWRVYH) the chain is on the cytoplasmic side. A helical membrane pass occupies residues 115 to 135 (LISVMILTRVIMQIIKDMILS). The Lumenal segment spans residues 136 to 204 (RTRGAQLWRS…LVCSVCTFFT (69 aa)). Phosphoserine is present on S145. A Phosphoserine; by CAMK2B modification is found at S147. S149 bears the Phosphoserine mark. Residues 205–225 (ILGSYIPGVILSYLLLLCAFL) form a helical membrane-spanning segment. The Cytoplasmic segment spans residues 226–493 (CPLFKCNDIG…GFLSNLLGGH (268 aa)). Positions 315-326 (FNLSEGYTPQTD) are enriched in polar residues. 2 disordered regions span residues 315–394 (FNLS…GLSL) and 435–493 (AAPS…LGGH). Residues 330 to 344 (DLDRPSEEVFSRDLS) show a composition bias toward basic and acidic residues. T353 carries the phosphothreonine modification. A compositionally biased stretch (basic and acidic residues) spans 368 to 388 (ELKRKKEQLDGGPRRSTEKKS). Residues 441 to 463 (EDTDTEEGDDFELLDQSELDQIE) show a composition bias toward acidic residues. The LIR motif motif lies at 449–454 (DDFELL). Over residues 467–486 (GLSQDQEAEAQQNKKSSGFL) the composition is skewed to polar residues.

The protein belongs to the RETREG family. Homooligomer; oligomerization is enhanced following endoplasmic reticulum stress and is mediated by the reticulon homology domain. Interacts with ATG8 family modifier proteins MAP1LC3A, MAP1LC3B, GABARAP, GABARAPL1 and GABARAPL2. In terms of processing, phosphorylation at Ser-147 by CAMK2B enhances oligomerization and membrane scission and reticulophagy activity.

Its subcellular location is the golgi apparatus. The protein localises to the cis-Golgi network membrane. It is found in the endoplasmic reticulum membrane. Functionally, endoplasmic reticulum (ER)-anchored autophagy regulator which mediates ER delivery into lysosomes through sequestration into autophagosomes. Promotes membrane remodeling and ER scission via its membrane bending capacity and targets the fragments into autophagosomes via interaction with ATG8 family proteins. Active under basal conditions. Required for collagen quality control in a LIR motif-dependent manner. Required for long-term survival of nociceptive and autonomic ganglion neurons. This is Reticulophagy regulator 1 (RETREG1) from Bos taurus (Bovine).